A 208-amino-acid chain; its full sequence is Thioredoxin domain-containing protein 9 (208 aa).

A Thioredoxin domain is found at 68-179; sequence YEEVADEKEF…MENRLARSEV (112 aa).

As to expression, expressed throughout the body with high expression in the nervous system, including the ventral nerve cord and tail neurons, and vulva.

The protein localises to the nucleus. Its subcellular location is the cytoplasm. Functionally, required for normal microtubule organization and function. Regulates tubulin acetylation in ALM and PLM neurons. This Caenorhabditis elegans protein is Thioredoxin domain-containing protein 9.